The primary structure comprises 374 residues: Translocating chain-associated membrane protein 1 (374 aa).

Residues 2-29 (AIRKKSTKSPPVLSHEFILQNHADIVSC) lie on the Cytoplasmic side of the membrane. Residues 30–50 (VAMVFLLGLMFEITAKASIIF) form a helical membrane-spanning segment. At 51 to 76 (VTLQYNVTLPATEEQATESTSLYYYG) the chain is on the lumenal side. An N-linked (GlcNAc...) asparagine glycan is attached at N56. Residues 77-97 (IKDLATVFFYMLVAIIIHAII) traverse the membrane as a helical segment. Over 98 to 121 (QEYVLDKINRRMHFSKTKHSKFNE) the chain is Cytoplasmic. Residues 117-326 (SKFNESGQLS…NFQLRRWREH (210 aa)) enclose the TLC domain. A helical membrane pass occupies residues 122-142 (SGQLSAFYLFSCIWGTFILIS). Over 143–159 (ENYISDPTILWRAYPHN) the chain is Lumenal. The chain crosses the membrane as a helical span at residues 160–180 (LMTFQMKFFYIAQLAYWFHAF). Residues 181–192 (PELYFQKTKKED) lie on the Cytoplasmic side of the membrane. Residues 193-213 (IPRQLVYIGLYLFHIAGAYLL) form a helical membrane-spanning segment. Topologically, residues 214–217 (NLNH) are lumenal. The helical transmembrane segment at 218 to 238 (LGLVLLVLHYFVEFLFHISRL) threads the bilayer. The Cytoplasmic segment spans residues 239-251 (FYFSDEKYQKGFS). Residues 252 to 272 (LWAVLFVLGRLLTLILSVLTV) traverse the membrane as a helical segment. At 273 to 297 (GFGLARAENQKLDFSAGNFNVLAVR) the chain is on the lumenal side. The helical transmembrane segment at 298 to 318 (IAVLASICITQAFMMWKFINF) threads the bilayer. Over 319–374 (QLRRWREHSTFQAPVVKKKPTVTKGRSSRKGTENGVNGTVTSNGADSPRNRKEKSS) the chain is Cytoplasmic. The segment covering 334–347 (VKKKPTVTKGRSSR) has biased composition (basic residues). Positions 334–374 (VKKKPTVTKGRSSRKGTENGVNGTVTSNGADSPRNRKEKSS) are disordered. The span at 352 to 363 (NGVNGTVTSNGA) shows a compositional bias: polar residues. A Phosphoserine modification is found at S365.

The protein belongs to the TRAM family. Interacts with SEC61B. May interact with Derlin-1/DERL1. In terms of processing, N-glycosylated.

It localises to the endoplasmic reticulum membrane. In terms of biological role, involved in the translocation of nascent protein chains into or through the endoplasmic reticulum (ER) membrane by facilitating the proper chain positioning at the SEC61 channel. Regulates the exposure of nascent secretory protein chain to the cytosol during translocation into the ER. May affect the phospholipid bilayer in the vicinity of the lateral gate of the SEC61 channel, thereby facilitating ER protein transport. Intimately associates with transmembrane (TM) domain of nascent membrane proteins during the entire integration process into the ER membrane. Associates with the second TM domain of G-protein-coupled receptor opsin/OPSD nascent chain in the ER membrane, which may facilitate its integration into the membrane. Under conditions of ER stress, participates in the disposal of misfolded ER membrane proteins during the unfolded protein response (UPR), an integrated stress response (ISR) pathway, by selectively retrotranslocating misfolded ER-membrane proteins from the ER into the cytosol where they are ubiquitinated and degraded by the proteasome. The sequence is that of Translocating chain-associated membrane protein 1 (TRAM1) from Canis lupus familiaris (Dog).